Reading from the N-terminus, the 114-residue chain is Ribonuclease P protein component (114 aa).

It belongs to the RnpA family. In terms of assembly, consists of a catalytic RNA component (M1 or rnpB) and a protein subunit.

It catalyses the reaction Endonucleolytic cleavage of RNA, removing 5'-extranucleotides from tRNA precursor.. In terms of biological role, RNaseP catalyzes the removal of the 5'-leader sequence from pre-tRNA to produce the mature 5'-terminus. It can also cleave other RNA substrates such as 4.5S RNA. The protein component plays an auxiliary but essential role in vivo by binding to the 5'-leader sequence and broadening the substrate specificity of the ribozyme. The protein is Ribonuclease P protein component of Borrelia turicatae (strain 91E135).